We begin with the raw amino-acid sequence, 271 residues long: Putative cysteine protease YopT-like blr2140 (271 aa).

Positions 1–81 (MYDRIGGSST…STSSPESPAT (81 aa)) are disordered. Polar residues predominate over residues 7–29 (GSSTRTSQTDEPSQSVDSGSFTE). Low complexity predominate over residues 65–81 (TSSASEPSTSSPESPAT). Cys-100 is an active-site residue. Residues 114 to 136 (SPSTRMSALTPGSQTHASAAERQ) are disordered. Residues His-213 and Asp-228 contribute to the active site.

Belongs to the peptidase C58 family.

Potential cysteine protease, which may play a central role after invasion of host cell. This is Putative cysteine protease YopT-like blr2140 from Bradyrhizobium diazoefficiens (strain JCM 10833 / BCRC 13528 / IAM 13628 / NBRC 14792 / USDA 110).